The primary structure comprises 292 residues: Cytidine deaminase (292 aa).

2 consecutive CMP/dCMP-type deaminase domains span residues 47–167 (TTLK…FGPK) and 186–292 (DHQD…YYSL). Position 88–90 (88–90 (NQE)) interacts with substrate. Histidine 101 lines the Zn(2+) pocket. The Proton donor role is filled by glutamate 103. Zn(2+)-binding residues include cysteine 128 and cysteine 131.

It belongs to the cytidine and deoxycytidylate deaminase family. As to quaternary structure, homodimer. Zn(2+) is required as a cofactor.

It catalyses the reaction cytidine + H2O + H(+) = uridine + NH4(+). The enzyme catalyses 2'-deoxycytidine + H2O + H(+) = 2'-deoxyuridine + NH4(+). In terms of biological role, this enzyme scavenges exogenous and endogenous cytidine and 2'-deoxycytidine for UMP synthesis. In Haemophilus influenzae (strain ATCC 51907 / DSM 11121 / KW20 / Rd), this protein is Cytidine deaminase.